The sequence spans 389 residues: Chaperone protein DnaJ (389 aa).

Positions 6 to 70 constitute a J domain; the sequence is DYYEILGLSK…EKRAQYDRFG (65 aa). The segment at 131-213 adopts a CR-type zinc-finger fold; the sequence is GVRKDIDIPR…CSGAGRVRSR (83 aa). Zn(2+) contacts are provided by cysteine 144, cysteine 147, cysteine 161, cysteine 164, cysteine 187, cysteine 190, cysteine 201, and cysteine 204. CXXCXGXG motif repeat units lie at residues 144–151, 161–168, 187–194, and 201–208; these read CSTCSGTG, CPNCGGTG, CSACHGRG, and CPTCSGAG. Positions 145–167 are disordered; sequence STCSGTGAKPGTSPKRCPNCGGT. A disordered region spans residues 351–389; it reads LSNGKKPEAEERSRSDKQKSEKPRKSKGLFEKVKDAFES. Residues 355 to 389 are compositionally biased toward basic and acidic residues; sequence KKPEAEERSRSDKQKSEKPRKSKGLFEKVKDAFES.

The protein belongs to the DnaJ family. In terms of assembly, homodimer. Zn(2+) is required as a cofactor.

The protein resides in the cytoplasm. Its function is as follows. Participates actively in the response to hyperosmotic and heat shock by preventing the aggregation of stress-denatured proteins and by disaggregating proteins, also in an autonomous, DnaK-independent fashion. Unfolded proteins bind initially to DnaJ; upon interaction with the DnaJ-bound protein, DnaK hydrolyzes its bound ATP, resulting in the formation of a stable complex. GrpE releases ADP from DnaK; ATP binding to DnaK triggers the release of the substrate protein, thus completing the reaction cycle. Several rounds of ATP-dependent interactions between DnaJ, DnaK and GrpE are required for fully efficient folding. Also involved, together with DnaK and GrpE, in the DNA replication of plasmids through activation of initiation proteins. The chain is Chaperone protein DnaJ from Methanosarcina mazei (strain ATCC BAA-159 / DSM 3647 / Goe1 / Go1 / JCM 11833 / OCM 88) (Methanosarcina frisia).